The chain runs to 613 residues: Envelope glycoprotein gp95 (613 aa).

The N-terminal stretch at 1–62 is a signal peptide; sequence MEAVIKAVLT…VLCEVTGVRA (62 aa). Residues 14 to 36 form a disordered region; that stretch reads GETSKKDSKKKPPATSKKDPEKT. Over 63-559 the chain is Extracellular; the sequence is DVHLLEQPGN…EWAVHLLKGL (497 aa). 7 disulfide bridges follow: Cys-87–Cys-506, Cys-121–Cys-151, Cys-191–Cys-252, Cys-265–Cys-275, Cys-360–Cys-377, Cys-417–Cys-453, and Cys-498–Cys-505. Asn-120, Asn-140, Asn-157, Asn-177, Asn-230, Asn-264, Asn-271, Asn-297, Asn-303, Asn-313, and Asn-321 each carry an N-linked (GlcNAc...) asparagine; by host glycan. The binding to host receptor stretch occupies residues 184-233; the sequence is IPSVAGGCIGFTPYDSPAGVYGWDRREVTHILLTDPGNNPFFDKASNSSK. Residues 268-294 form a binding to host receptor region; that stretch reads MRQNWSICQDVWGRGPPENWCTSTGGT. Asn-388 and Asn-398 each carry an N-linked (GlcNAc...) asparagine; by host glycan. The segment at 425–445 is fusion peptide; sequence GPTARIFASILAPGVAAAQAL. An N-linked (GlcNAc...) asparagine; by host glycan is attached at Asn-460. The segment at 481-497 is immunosuppression; it reads LQNRAAIDFLLLAHGHG. Asn-508 carries an N-linked (GlcNAc...) asparagine; by host glycan. Residues 560–580 form a helical membrane-spanning segment; that stretch reads LLGLVVILLLVVCLPCLLQIV. 2 S-palmitoyl cysteine; by host lipidation sites follow: Cys-572 and Cys-575. Residues 581 to 613 are Extracellular-facing; that stretch reads CGNIRKMINNSISYHTEYKKLQKAYGQPESRIV. An N-linked (GlcNAc...) asparagine; by host glycan is attached at Asn-589.

Belongs to the Alpharetroviruses envelope glycoprotein family. Heterodimer with the transmembrane protein. The mature envelope protein (Env) consists of a trimer of SU-TM heterodimers attached by a labile interchain disulfide bond. Interacts with the host cell entry receptor TVB-S3; this interaction allows the viral attachment. In terms of assembly, heterodimer with the surface protein. The mature envelope protein (Env) consists of a trimer of SU-TM heterodimers attached by a labile interchain disulfide bond. Post-translationally, specific enzymatic cleavages in vivo yield mature proteins. Envelope glycoproteins are synthesized as an inactive precursor that is N-glycosylated and processed likely by host cell furin or by a furin-like protease in the Golgi to yield the mature SU and TM proteins. The cleavage site between SU and TM requires the minimal sequence [KR]-X-[KR]-R. The transmembrane protein is palmitoylated. Palmitoylation is necessary for glycoprotein function and infectivity.

Its subcellular location is the virion membrane. It localises to the host cell membrane. Functionally, the surface protein (SU) attaches the virus to the host cell entry receptor TVB-S3/CAR1. This interaction triggers the refolding of the transmembrane protein (TM) thereby unmasking its fusion peptide and the formation of a reactive thiolate on Cys-100 to activate its fusogenic potential. Fusion occurs at the host cell plasma membrane. In terms of biological role, the transmembrane protein (TM) acts as a class I viral fusion protein. Under the current model, the protein has at least 3 conformational states: pre-fusion native state, pre-hairpin intermediate state, and post-fusion hairpin state. During viral and target cell membrane fusion, the coiled coil regions (heptad repeats) assume a trimer-of-hairpins structure, positioning the fusion peptide in close proximity to the C-terminal region of the ectodomain. The formation of this structure appears to drive apposition and subsequent fusion of viral and target cell membranes. Membranes fusion leads to delivery of the nucleocapsid into the cytoplasm. The protein is Envelope glycoprotein gp95 (env) of Rous sarcoma virus subgroup B (strain Schmidt-Ruppin) (RSV-SR-B).